The primary structure comprises 670 residues: ATP synthase subunit alpha 2 (670 aa).

180–187 serves as a coordination point for ATP; the sequence is GDRATGKT. Positions 527–670 are disordered; it reads AEDAAGDIGG…DAEAEARHKR (144 aa). Over residues 543–588 the composition is skewed to basic and acidic residues; it reads ARGDADRDADHGANREVSREVSPEASREVSREVSREVSHEADRDAA. A compositionally biased stretch (low complexity) spans 589–599; the sequence is ADAARVAGRAP. Positions 621-639 are enriched in basic and acidic residues; sequence ADGDRASASRPRPDARGDA. Residues 640–661 are compositionally biased toward low complexity; sequence ARTAPSPQGGAEVNVNAAANVD.

This sequence belongs to the ATPase alpha/beta chains family. F-type ATPases have 2 components, CF(1) - the catalytic core - and CF(0) - the membrane proton channel. CF(1) has five subunits: alpha(3), beta(3), gamma(1), delta(1), epsilon(1). CF(0) has three main subunits: a(1), b(2) and c(9-12). The alpha and beta chains form an alternating ring which encloses part of the gamma chain. CF(1) is attached to CF(0) by a central stalk formed by the gamma and epsilon chains, while a peripheral stalk is formed by the delta and b chains.

The protein resides in the cell inner membrane. The enzyme catalyses ATP + H2O + 4 H(+)(in) = ADP + phosphate + 5 H(+)(out). Functionally, produces ATP from ADP in the presence of a proton gradient across the membrane. The alpha chain is a regulatory subunit. The chain is ATP synthase subunit alpha 2 from Burkholderia pseudomallei (strain 668).